A 472-amino-acid chain; its full sequence is Sulfate adenylyltransferase subunit 1 (472 aa).

The tr-type G domain maps to 24-240; sequence KSLLRFLTCG…ENAEVGTRDL (217 aa). A G1 region spans residues 33–40; sequence GSVDDGKS. A GTP-binding site is contributed by 33 to 40; it reads GSVDDGKS. The G2 stretch occupies residues 91-95; that stretch reads GITID. Positions 112 to 115 are G3; it reads DTPG. Residues 112 to 116 and 167 to 170 each bind GTP; these read DTPGH and NKMD. The interval 167–170 is G4; it reads NKMD. The G5 stretch occupies residues 204–206; sequence SAL.

Belongs to the TRAFAC class translation factor GTPase superfamily. Classic translation factor GTPase family. CysN/NodQ subfamily. Heterodimer composed of CysD, the smaller subunit, and CysN.

It catalyses the reaction sulfate + ATP + H(+) = adenosine 5'-phosphosulfate + diphosphate. It functions in the pathway sulfur metabolism; hydrogen sulfide biosynthesis; sulfite from sulfate: step 1/3. Functionally, with CysD forms the ATP sulfurylase (ATPS) that catalyzes the adenylation of sulfate producing adenosine 5'-phosphosulfate (APS) and diphosphate, the first enzymatic step in sulfur assimilation pathway. APS synthesis involves the formation of a high-energy phosphoric-sulfuric acid anhydride bond driven by GTP hydrolysis by CysN coupled to ATP hydrolysis by CysD. The protein is Sulfate adenylyltransferase subunit 1 of Tolumonas auensis (strain DSM 9187 / NBRC 110442 / TA 4).